A 193-amino-acid polypeptide reads, in one-letter code: Large ribosomal subunit protein uL11 (193 aa).

The protein belongs to the universal ribosomal protein uL11 family. In terms of assembly, part of the ribosomal stalk of the 50S ribosomal subunit. Interacts with L10 and the large rRNA to form the base of the stalk. L10 forms an elongated spine to which L12 dimers bind in a sequential fashion forming a multimeric L10(L12)X complex. In terms of processing, one or more lysine residues are methylated.

Its function is as follows. Forms part of the ribosomal stalk which helps the ribosome interact with GTP-bound translation factors. The protein is Large ribosomal subunit protein uL11 of Mycoplasmopsis synoviae (strain 53) (Mycoplasma synoviae).